We begin with the raw amino-acid sequence, 228 residues long: Adenosylcobinamide-GDP ribazoletransferase (228 aa).

The next 6 membrane-spanning stretches (helical) occupy residues 24–44, 50–70, 96–116, 117–137, 159–176, and 181–198; these read VWMLPLLTPLTAFIPSLILYL, NVLSILSLYWVIGLLHLDGLA, IAGTFAVVMILLIQVYSLFSA, PFYSIYLAELNSKMAMLLALA, VFLGGVLYALLLIPILLY, and IFALLGLVGGIYAVKISL.

The protein belongs to the CobS family. Requires Mg(2+) as cofactor.

The protein resides in the cell membrane. The enzyme catalyses alpha-ribazole + adenosylcob(III)inamide-GDP = adenosylcob(III)alamin + GMP + H(+). It carries out the reaction alpha-ribazole 5'-phosphate + adenosylcob(III)inamide-GDP = adenosylcob(III)alamin 5'-phosphate + GMP + H(+). The protein operates within cofactor biosynthesis; adenosylcobalamin biosynthesis; adenosylcobalamin from cob(II)yrinate a,c-diamide: step 7/7. Its function is as follows. Joins adenosylcobinamide-GDP and alpha-ribazole to generate adenosylcobalamin (Ado-cobalamin). Also synthesizes adenosylcobalamin 5'-phosphate from adenosylcobinamide-GDP and alpha-ribazole 5'-phosphate. The sequence is that of Adenosylcobinamide-GDP ribazoletransferase from Pyrococcus furiosus (strain ATCC 43587 / DSM 3638 / JCM 8422 / Vc1).